Consider the following 218-residue polypeptide: Small ribosomal subunit protein uS3 (218 aa).

Positions 38 to 106 (IRDYVAKRLS…RVHINIVEIK (69 aa)) constitute a KH type-2 domain.

The protein belongs to the universal ribosomal protein uS3 family. Part of the 30S ribosomal subunit. Forms a tight complex with proteins S10 and S14.

Binds the lower part of the 30S subunit head. Binds mRNA in the 70S ribosome, positioning it for translation. The chain is Small ribosomal subunit protein uS3 from Listeria monocytogenes serotype 4b (strain F2365).